We begin with the raw amino-acid sequence, 498 residues long: Lysine--tRNA ligase (498 aa).

2 residues coordinate Mg(2+): Glu-408 and Glu-415.

This sequence belongs to the class-II aminoacyl-tRNA synthetase family. Homodimer. The cofactor is Mg(2+).

It is found in the cytoplasm. It catalyses the reaction tRNA(Lys) + L-lysine + ATP = L-lysyl-tRNA(Lys) + AMP + diphosphate. This chain is Lysine--tRNA ligase, found in Listeria innocua serovar 6a (strain ATCC BAA-680 / CLIP 11262).